The sequence spans 216 residues: Ribonuclease T (216 aa).

The 175-residue stretch at 28 to 202 folds into the Exonuclease domain; sequence VVVDVETGGF…YDTEQTARLF (175 aa). Residues D31, E33, H189, and D194 each contribute to the Mg(2+) site. H189 (proton donor/acceptor) is an active-site residue.

This sequence belongs to the RNase T family. As to quaternary structure, homodimer. Mg(2+) serves as cofactor.

Functionally, trims short 3' overhangs of a variety of RNA species, leaving a one or two nucleotide 3' overhang. Responsible for the end-turnover of tRNA: specifically removes the terminal AMP residue from uncharged tRNA (tRNA-C-C-A). Also appears to be involved in tRNA biosynthesis. The polypeptide is Ribonuclease T (Xanthomonas campestris pv. campestris (strain 8004)).